Consider the following 277-residue polypeptide: Nuclear egress protein 2 (277 aa).

At 1–250 (MEVIPNINSR…ASGECVTTIR (250 aa)) the chain is on the perinuclear space side. A helical membrane pass occupies residues 251–271 (IPRYIVMLWIFSVLLAMVTWG). At 272–277 (SYRLYS) the chain is on the nuclear side.

Belongs to the herpesviridae NEC2 protein family. As to quaternary structure, forms a heterohexameric complex with NEC1. In terms of processing, phosphorylated.

The protein localises to the host nucleus inner membrane. Plays an essential role in virion nuclear egress, the first step of virion release from infected cell. Within the host nucleus, NEC1 interacts with the newly formed capsid through the vertexes and directs it to the inner nuclear membrane by associating with NEC2. Induces the budding of the capsid at the inner nuclear membrane as well as its envelopment into the perinuclear space. There, the NEC1/NEC2 complex promotes the fusion of the enveloped capsid with the outer nuclear membrane and the subsequent release of the viral capsid into the cytoplasm where it will reach the secondary budding sites in the host Golgi or trans-Golgi network. The chain is Nuclear egress protein 2 from Gallid herpesvirus 2 (strain Chicken/Md5/ATCC VR-987) (GaHV-2).